The sequence spans 743 residues: Zinc transporter ZIP6 (743 aa).

Positions 1–20 are cleaved as a signal peptide; that stretch reads MARKLSVILILTFALSVTNP. Over 21-313 the chain is Extracellular; that stretch reads LHELKAAAFP…PKTYSLQIAW (293 aa). The N-linked (GlcNAc...) asparagine glycan is linked to Asn-67. Positions 96-116 are enriched in basic and acidic residues; sequence HEHHSDHEHHSDHEHHSDHEH. 2 disordered regions span residues 96–174 and 190–245; these read HEHH…SASE and LETI…SRNT. Residues 117–132 show a composition bias toward basic residues; that stretch reads HSHRNHAASGKNKRKA. 2 stretches are compositionally biased toward basic and acidic residues: residues 133 to 147 and 155 to 167; these read LCPDHDSDSSGKDPR and HRSEHASGRRNVK. Residues 206 to 215 show a composition bias toward polar residues; sequence VSSSTPPSVT. Positions 227 to 237 are enriched in basic and acidic residues; sequence KTNESVSEPRK. Residues Asn-229, Asn-254, and Asn-271 are each glycosylated (N-linked (GlcNAc...) asparagine). The helical transmembrane segment at 314–334 threads the bilayer; the sequence is VGGFIAISIISFLSLLGVILV. At 335–343 the chain is on the cytoplasmic side; that stretch reads PLMNRVFFK. A helical membrane pass occupies residues 344–364; that stretch reads FLLSFLVALAVGTLSGDAFLH. At 365 to 411 the chain is on the extracellular side; the sequence is LLPHSHASHHHSHSHEEPAMEMKRGPLFSHLSSQNIEESAYFDSTWK. The helical transmembrane segment at 412–432 threads the bilayer; it reads GLTALGGLYFMFLVEHVLTLI. The Cytoplasmic portion of the chain corresponds to 433-645; sequence KQFKDKKKKN…LKAGMTVKQA (213 aa). A coiled-coil region spans residues 452–474; that stretch reads VEIKKQLSKYESQLSTNEEKVDT. Phosphoserine is present on residues Ser-459 and Ser-466. The chain crosses the membrane as a helical span at residues 646–666; the sequence is VLYNALSAMLAYLGMATGIFI. At 667-674 the chain is on the extracellular side; sequence GHYAENVS. Asn-672 carries N-linked (GlcNAc...) asparagine glycosylation. Residues 675-695 form a helical membrane-spanning segment; it reads MWIFALTAGLFMYVALVDMVP. Over 696-712 the chain is Cytoplasmic; the sequence is EMLHNDASDHGCSRWGY. Residues 713 to 733 traverse the membrane as a helical segment; that stretch reads FFLQNAGMLLGFGIMLLISIF. Residues 734–743 are Extracellular-facing; sequence EHKIVFRINF.

It belongs to the ZIP transporter (TC 2.A.5) family. As to quaternary structure, interacts with SLC39A10; which triggers cells to undergo EMT and mitosis. Found in a complex with SLC39A6, SLC39A10 and with the 'Ser-727' phosphorylated form of STAT3 throughout mitosis. Found in a complex with SLC39A6, SLC39A10 and with NCAM1; this complex controls NCAM1 phosphorylation and integration into focal adhesion complexes during epithelial-to-mesenchymal transition (EMT). Found in a complex with SLC39A6, SLC39A10 and with GSK3B that controls NCAM1 phosphorylation. Post-translationally, cleaved on the N-terminus before locating to the plasma membrane. In terms of processing, N-glycosylated. Phosphorylated by ZAP70 in response to TCR stimulation leading to its activation.

Its subcellular location is the cell membrane. It is found in the cell projection. It localises to the lamellipodium membrane. The protein resides in the membrane raft. The protein localises to the apical cell membrane. The catalysed reaction is Zn(2+)(in) = Zn(2+)(out). Zinc-influx transporter which plays a role in zinc homeostasis and in the induction of epithelial-to-mesenchymal transition (EMT). When associated with SLC39A10, the heterodimer formed by SLC39A10 and SLC39A6 mediates cellular zinc uptake to trigger cells to undergo epithelial- to-mesenchymal transition (EMT). The SLC39A10-SLC39A6 heterodimer also controls NCAM1 phosphorylation and its integration into focal adhesion complexes during EMT. Zinc influx inactivates GSK3B, enabling unphosphorylated SNAI1 in the nucleus to down-regulate adherence genes such as CDH1, causing loss of cell adherence. In addition, the SLC39A10-SLC39A6 heterodimer plays an essentiel role in initiating mitosis by importing zinc into cells to initiate a pathway resulting in the onset of mitosis. Participates in the T-cell receptor signaling regulation by mediating cellular zinc uptake into activated lymphocytes. Regulates the zinc influx necessary for proper meiotic progression to metaphase II (MII) that allows the oocyte-to-egg transition. This is Zinc transporter ZIP6 from Pongo abelii (Sumatran orangutan).